The primary structure comprises 204 residues: Glycerol-3-phosphate acyltransferase (204 aa).

A run of 5 helical transmembrane segments spans residues 8-28 (ILIFAYLLGSINSAIIVCYIF), 53-73 (VLAAITLIFDILKGLVPVVIA), 81-101 (FITACTALYAILGHIFPIFFG), 116-136 (FGFSWILGLIFVITWLCVAII), and 155-175 (VIFTSDLQVAAPFLIIAIIIL).

The protein belongs to the PlsY family. As to quaternary structure, probably interacts with PlsX.

The protein resides in the cell inner membrane. It catalyses the reaction an acyl phosphate + sn-glycerol 3-phosphate = a 1-acyl-sn-glycero-3-phosphate + phosphate. The protein operates within lipid metabolism; phospholipid metabolism. Its function is as follows. Catalyzes the transfer of an acyl group from acyl-phosphate (acyl-PO(4)) to glycerol-3-phosphate (G3P) to form lysophosphatidic acid (LPA). This enzyme utilizes acyl-phosphate as fatty acyl donor, but not acyl-CoA or acyl-ACP. The protein is Glycerol-3-phosphate acyltransferase of Francisella tularensis subsp. holarctica (strain OSU18).